The chain runs to 365 residues: Histidinol-phosphate aminotransferase (365 aa).

At Lys222 the chain carries N6-(pyridoxal phosphate)lysine.

It belongs to the class-II pyridoxal-phosphate-dependent aminotransferase family. Histidinol-phosphate aminotransferase subfamily. Homodimer. Requires pyridoxal 5'-phosphate as cofactor.

The catalysed reaction is L-histidinol phosphate + 2-oxoglutarate = 3-(imidazol-4-yl)-2-oxopropyl phosphate + L-glutamate. Its pathway is amino-acid biosynthesis; L-histidine biosynthesis; L-histidine from 5-phospho-alpha-D-ribose 1-diphosphate: step 7/9. The chain is Histidinol-phosphate aminotransferase from Geobacillus thermodenitrificans (strain NG80-2).